The primary structure comprises 49 residues: uncharacterized protein (49 aa).

This is an uncharacterized protein from Sulfolobus islandicus filamentous virus (isolate Iceland/Hveragerdi) (SIFV).